The following is a 93-amino-acid chain: Small ribosomal subunit protein uS19 (93 aa).

It belongs to the universal ribosomal protein uS19 family.

Protein S19 forms a complex with S13 that binds strongly to the 16S ribosomal RNA. The sequence is that of Small ribosomal subunit protein uS19 from Maridesulfovibrio salexigens (strain ATCC 14822 / DSM 2638 / NCIMB 8403 / VKM B-1763) (Desulfovibrio salexigens).